The primary structure comprises 1266 residues: Rho GTPase-activating protein 29 (1266 aa).

Serine 171, serine 176, serine 179, and serine 190 each carry phosphoserine. One can recognise an F-BAR domain in the interval 192–462 (IELDNLLLKN…SAKLYDPGQE (271 aa)). Residues 296–418 (RKNEMEKQRK…EILTQLRTLV (123 aa)) adopt a coiled-coil conformation. The interval 482 to 501 (NVNKQMTNSPQTSGYEPADS) is disordered. Over residues 483–495 (VNKQMTNSPQTSG) the composition is skewed to polar residues. Residues serine 501, serine 521, and serine 554 each carry the phosphoserine modification. Over residues 542–561 (DSESTGGSSESRSLDSESIS) the composition is skewed to low complexity. The interval 542–601 (DSESTGGSSESRSLDSESISPGDFHRKLPRTPSSGTMSSADDLDEREPPSPSEAGPNSLG) is disordered. The Phorbol-ester/DAG-type zinc-finger motif lies at 614–659 (THKFRKLRSPTKCRDCDGIVMFPGVECEECLLVCHRKCLENLVIIC). The Rho-GAP domain maps to 673 to 888 (AEFIQVAKKE…FLITYSQKIF (216 aa)). Serine 920, serine 956, and serine 1028 each carry phosphoserine. Disordered regions lie at residues 1039 to 1081 (SSPT…KVNG), 1116 to 1157 (GLTV…ATAV), and 1209 to 1266 (KSDP…PQFV). Residues 1072 to 1081 (SNTTRSKVNG) are compositionally biased toward polar residues. Over residues 1124–1136 (NRDHPGSKAHAEP) the composition is skewed to basic and acidic residues. Phosphoserine occurs at positions 1149 and 1151. The segment covering 1256–1266 (EDLEDEIPQFV) has biased composition (acidic residues). Residues 1263-1266 (PQFV) form an interaction with PTPN13/PTPL1 region.

Interacts with PTPN13/PTPL1. Interacts with RAP2A via its coiled coil domain. Interacts with RASIP1.

In terms of biological role, GTPase activator for the Rho-type GTPases by converting them to an inactive GDP-bound state. Has strong activity toward RHOA, and weaker activity toward RAC1 and CDC42. May act as a specific effector of RAP2A to regulate Rho. In concert with RASIP1, suppresses RhoA signaling and dampens ROCK and MYH9 activities in endothelial cells and plays an essential role in blood vessel tubulogenesis. The protein is Rho GTPase-activating protein 29 (Arhgap29) of Mus musculus (Mouse).